The chain runs to 516 residues: tRNA-2-methylthio-N(6)-dimethylallyladenosine synthase (516 aa).

The MTTase N-terminal domain occupies 17 to 133; that stretch reads RSFEVRTFGC…LPSLLSRSEH (117 aa). 6 residues coordinate [4Fe-4S] cluster: Cys-26, Cys-62, Cys-96, Cys-170, Cys-174, and Cys-177. Residues 156–392 enclose the Radical SAM core domain; it reads RESAYAGWVS…LALQERISTE (237 aa). The TRAM domain maps to 395 to 466; it reads AKLIGTEVEL…PFFLIADSGV (72 aa). 2 disordered regions span residues 409–438 and 492–516; these read SGGRKNDKTQRMTGRSRDGRLVHFDPQGHV and GLGLPSIGSPAQKRSETSKSSGCGC. Basic and acidic residues predominate over residues 412-438; the sequence is RKNDKTQRMTGRSRDGRLVHFDPQGHV.

Belongs to the methylthiotransferase family. MiaB subfamily. As to quaternary structure, monomer. [4Fe-4S] cluster serves as cofactor.

It is found in the cytoplasm. The enzyme catalyses N(6)-dimethylallyladenosine(37) in tRNA + (sulfur carrier)-SH + AH2 + 2 S-adenosyl-L-methionine = 2-methylsulfanyl-N(6)-dimethylallyladenosine(37) in tRNA + (sulfur carrier)-H + 5'-deoxyadenosine + L-methionine + A + S-adenosyl-L-homocysteine + 2 H(+). Catalyzes the methylthiolation of N6-(dimethylallyl)adenosine (i(6)A), leading to the formation of 2-methylthio-N6-(dimethylallyl)adenosine (ms(2)i(6)A) at position 37 in tRNAs that read codons beginning with uridine. The chain is tRNA-2-methylthio-N(6)-dimethylallyladenosine synthase from Corynebacterium diphtheriae (strain ATCC 700971 / NCTC 13129 / Biotype gravis).